The chain runs to 62 residues: Large ribosomal subunit protein bL28 (62 aa).

Belongs to the bacterial ribosomal protein bL28 family.

In Streptococcus equi subsp. equi (strain 4047), this protein is Large ribosomal subunit protein bL28.